A 210-amino-acid polypeptide reads, in one-letter code: Outer-membrane lipoprotein carrier protein (210 aa).

The N-terminal stretch at 1 to 22 (MRAFKWALAIGATLALPLTAQA) is a signal peptide.

The protein belongs to the LolA family. Monomer.

It is found in the periplasm. Its function is as follows. Participates in the translocation of lipoproteins from the inner membrane to the outer membrane. Only forms a complex with a lipoprotein if the residue after the N-terminal Cys is not an aspartate (The Asp acts as a targeting signal to indicate that the lipoprotein should stay in the inner membrane). The protein is Outer-membrane lipoprotein carrier protein of Chromohalobacter salexigens (strain ATCC BAA-138 / DSM 3043 / CIP 106854 / NCIMB 13768 / 1H11).